The sequence spans 176 residues: Calponin-1 (176 aa).

The region spanning 22–125 (PQTERQLRVW…STLIALASQA (104 aa)) is the Calponin-homology (CH) domain. The stretch at 158-176 (IGLQMGTNKFASQQGMTAY) is one Calponin-like repeat. Phosphothreonine; by ROCK2 is present on Thr-164. Residue Ser-169 is modified to Phosphoserine; by ROCK2. Thr-174 carries the post-translational modification Phosphothreonine; by ROCK2.

Belongs to the calponin family. In terms of tissue distribution, smooth muscle, and tissues containing significant amounts of smooth muscle.

In terms of biological role, thin filament-associated protein that is implicated in the regulation and modulation of smooth muscle contraction. It is capable of binding to actin, calmodulin and tropomyosin. The interaction of calponin with actin inhibits the actomyosin Mg-ATPase activity. The polypeptide is Calponin-1 (CNN1) (Meleagris gallopavo (Wild turkey)).